A 286-amino-acid chain; its full sequence is Polyamine aminopropyltransferase (286 aa).

The 234-residue stretch at 5 to 238 (TMWHETLHDQ…GIMTFAWATD (234 aa)) folds into the PABS domain. Residue Gln33 participates in S-methyl-5'-thioadenosine binding. Residues His64 and Asp88 each contribute to the spermidine site. S-methyl-5'-thioadenosine contacts are provided by residues Glu108 and 140–141 (DG). Asp158 functions as the Proton acceptor in the catalytic mechanism. 158-161 (DCTD) provides a ligand contact to spermidine. Pro165 is a binding site for S-methyl-5'-thioadenosine.

Belongs to the spermidine/spermine synthase family. As to quaternary structure, homodimer or homotetramer.

Its subcellular location is the cytoplasm. The catalysed reaction is S-adenosyl 3-(methylsulfanyl)propylamine + putrescine = S-methyl-5'-thioadenosine + spermidine + H(+). Its pathway is amine and polyamine biosynthesis; spermidine biosynthesis; spermidine from putrescine: step 1/1. Functionally, catalyzes the irreversible transfer of a propylamine group from the amino donor S-adenosylmethioninamine (decarboxy-AdoMet) to putrescine (1,4-diaminobutane) to yield spermidine. The protein is Polyamine aminopropyltransferase of Salmonella typhi.